A 166-amino-acid polypeptide reads, in one-letter code: CDP-archaeol synthase (166 aa).

Transmembrane regions (helical) follow at residues 7 to 27, 55 to 75, 78 to 98, 116 to 136, and 138 to 158; these read LLLSILIYLPAFIANGSGPFI, LIVALTFGTTVGVIISKFFTA, TLISFLESLFAMIGDMIGAFI, LDFVLGASLILVLMRVNITWY, and FLFICGLAFFLHQGTNYVAYL.

The protein belongs to the CDP-archaeol synthase family. Mg(2+) serves as cofactor.

The protein localises to the cell membrane. It catalyses the reaction 2,3-bis-O-(geranylgeranyl)-sn-glycerol 1-phosphate + CTP + H(+) = CDP-2,3-bis-O-(geranylgeranyl)-sn-glycerol + diphosphate. Its pathway is membrane lipid metabolism; glycerophospholipid metabolism. In terms of biological role, catalyzes the formation of CDP-2,3-bis-(O-geranylgeranyl)-sn-glycerol (CDP-archaeol) from 2,3-bis-(O-geranylgeranyl)-sn-glycerol 1-phosphate (DGGGP) and CTP. This reaction is the third ether-bond-formation step in the biosynthesis of archaeal membrane lipids. In Saccharolobus islandicus (strain Y.N.15.51 / Yellowstone #2) (Sulfolobus islandicus), this protein is CDP-archaeol synthase.